The following is a 366-amino-acid chain: Flagellar P-ring protein (366 aa).

An N-terminal signal peptide occupies residues 1-22 (MFTRKSVILMAVLLIWSAVSYA).

Belongs to the FlgI family. In terms of assembly, the basal body constitutes a major portion of the flagellar organelle and consists of four rings (L,P,S, and M) mounted on a central rod.

The protein localises to the periplasm. Its subcellular location is the bacterial flagellum basal body. Assembles around the rod to form the L-ring and probably protects the motor/basal body from shearing forces during rotation. The polypeptide is Flagellar P-ring protein (Hydrogenovibrio crunogenus (strain DSM 25203 / XCL-2) (Thiomicrospira crunogena)).